The primary structure comprises 29 residues: Conotoxin Bu17 (29 aa).

Intrachain disulfides connect cysteine 4–cysteine 19, cysteine 5–cysteine 25, and cysteine 15–cysteine 26. A Cysteine amide modification is found at cysteine 26.

This sequence belongs to the conotoxin M superfamily. In terms of tissue distribution, expressed by the venom duct.

Its subcellular location is the secreted. In Conus bullatus (Bubble cone), this protein is Conotoxin Bu17.